The sequence spans 340 residues: Protein RecA (340 aa).

ATP is bound at residue 74–81 (GPESSGKT).

The protein belongs to the RecA family.

The protein resides in the cytoplasm. Can catalyze the hydrolysis of ATP in the presence of single-stranded DNA, the ATP-dependent uptake of single-stranded DNA by duplex DNA, and the ATP-dependent hybridization of homologous single-stranded DNAs. It interacts with LexA causing its activation and leading to its autocatalytic cleavage. In Porphyromonas gingivalis (strain ATCC 33277 / DSM 20709 / CIP 103683 / JCM 12257 / NCTC 11834 / 2561), this protein is Protein RecA.